A 668-amino-acid chain; its full sequence is UvrABC system protein B (668 aa).

Residues 25–170 (NSILLGNKYQ…FVGQKISIKE (146 aa)) form the Helicase ATP-binding domain. ATP is bound at residue 38 to 45 (GVTGSGKT). The Beta-hairpin signature appears at 91-114 (YYDYYQPESYVPSKDLFIEKEATI). The 167-residue stretch at 429–595 (QMEDLYSEIQ…TIVKKIQNIL (167 aa)) folds into the Helicase C-terminal domain. The region spanning 622–657 (KKLIDKLKFDLEEAVNDERFEDAIVLRDKIKELSSK) is the UVR domain.

Belongs to the UvrB family. As to quaternary structure, forms a heterotetramer with UvrA during the search for lesions. Interacts with UvrC in an incision complex.

The protein localises to the cytoplasm. The UvrABC repair system catalyzes the recognition and processing of DNA lesions. A damage recognition complex composed of 2 UvrA and 2 UvrB subunits scans DNA for abnormalities. Upon binding of the UvrA(2)B(2) complex to a putative damaged site, the DNA wraps around one UvrB monomer. DNA wrap is dependent on ATP binding by UvrB and probably causes local melting of the DNA helix, facilitating insertion of UvrB beta-hairpin between the DNA strands. Then UvrB probes one DNA strand for the presence of a lesion. If a lesion is found the UvrA subunits dissociate and the UvrB-DNA preincision complex is formed. This complex is subsequently bound by UvrC and the second UvrB is released. If no lesion is found, the DNA wraps around the other UvrB subunit that will check the other stand for damage. In Borreliella burgdorferi (strain ZS7) (Borrelia burgdorferi), this protein is UvrABC system protein B.